Consider the following 429-residue polypeptide: Protein S-Myc (429 aa).

Tyr-36 bears the Phosphotyrosine; by Tyr-kinases mark. Residues 301-325 (PLPYAEDARPLKKPRSQDPLGPLKC) are disordered. In terms of domain architecture, bHLH spans 346-398 (ERRRNHNRMERQRRDIMRSSFLNLRDLVPELVHNEKAAKVVILKKATEYIHTL). Positions 398-419 (LQTDESKLLVEREKLYERKQQL) are leucine-zipper.

As to quaternary structure, efficient DNA binding requires dimerization with another bHLH protein.

The protein resides in the nucleus. Functionally, has apoptosis-inducing activity. The chain is Protein S-Myc (Mycs) from Rattus norvegicus (Rat).